The sequence spans 537 residues: Tyrosine-protein kinase fyna (537 aa).

Glycine 2 carries N-myristoyl glycine lipidation. S-palmitoyl cysteine attachment occurs at residues cysteine 3 and cysteine 6. Threonine 12 is modified (phosphothreonine; by PKC). The disordered stretch occupies residues 13–34 (KLTDERETSVSQHAGYRYGSDP). Residues 82–143 (TGVTLFVALY…PSNYVAPVDS (62 aa)) form the SH3 domain. Residues 149 to 246 (WYFGKLGRKD…GLCCRLIVPC (98 aa)) enclose the SH2 domain. The Protein kinase domain occupies 271-524 (LQLIKRLGNG…YLQAFLEDYF (254 aa)). ATP is bound by residues 277–285 (LGNGQFGEV) and lysine 299. Catalysis depends on aspartate 390, which acts as the Proton acceptor. A Phosphotyrosine; by autocatalysis modification is found at tyrosine 420. Tyrosine 531 is subject to Phosphotyrosine.

It belongs to the protein kinase superfamily. Tyr protein kinase family. SRC subfamily. Requires Mn(2+) as cofactor. In terms of tissue distribution, widely expressed.

It is found in the cytoplasm. The protein resides in the nucleus. It carries out the reaction L-tyrosyl-[protein] + ATP = O-phospho-L-tyrosyl-[protein] + ADP + H(+). With respect to regulation, inhibited by phosphorylation of Tyr-531 by leukocyte common antigen and activated by dephosphorylation of this site. Relatively inactive in the unfertilized oocyte, undergoes rapid activation immediately following fertilization. Total activity increases progressively during later development and remains elevated during sphere and epiboly stage. Its function is as follows. Tyrosine-protein kinase implicated in the control of cell growth. Plays a role in the regulation of intracellular calcium levels. Required in brain development and mature brain function with important roles in the regulation of axon growth, axon guidance, and neurite extension. Role in cntn1-mediated signaling. Required for convergent extension cell movements during gastrulation, acting with yes via rhoa. May be required for epiboly to occur, possibly through its effects in calcium signaling. The polypeptide is Tyrosine-protein kinase fyna (fyna) (Danio rerio (Zebrafish)).